The primary structure comprises 407 residues: Proteasome-activating nucleotidase (407 aa).

The stretch at 22 to 67 (KEKTQIAELESKVLRLELKNKDISRENVQIKKENEILKRELDKLRI) forms a coiled coil. ATP contacts are provided by residues 192–197 (GTGKTL) and His-331. The tract at residues 405 to 407 (MYG) is docks into pockets in the proteasome alpha-ring to cause gate opening.

Belongs to the AAA ATPase family. Homohexamer. The hexameric complex has a two-ring architecture resembling a top hat that caps the 20S proteasome core at one or both ends. Upon ATP-binding, the C-terminus of PAN interacts with the alpha-rings of the proteasome core by binding to the intersubunit pockets.

The protein localises to the cytoplasm. Its function is as follows. ATPase which is responsible for recognizing, binding, unfolding and translocation of substrate proteins into the archaeal 20S proteasome core particle. Is essential for opening the gate of the 20S proteasome via an interaction with its C-terminus, thereby allowing substrate entry and access to the site of proteolysis. Thus, the C-termini of the proteasomal ATPase function like a 'key in a lock' to induce gate opening and therefore regulate proteolysis. Unfolding activity requires energy from ATP hydrolysis, whereas ATP binding alone promotes ATPase-20S proteasome association which triggers gate opening, and supports translocation of unfolded substrates. The protein is Proteasome-activating nucleotidase of Methanococcus maripaludis (strain C6 / ATCC BAA-1332).